The primary structure comprises 1217 residues: DNA-directed RNA polymerase subunit beta' (1217 aa).

Positions 60, 62, 75, and 78 each coordinate Zn(2+). 3 residues coordinate Mg(2+): D449, D451, and D453. Residues C818, C892, C899, and C902 each coordinate Zn(2+).

The protein belongs to the RNA polymerase beta' chain family. The RNAP catalytic core consists of 2 alpha, 1 beta, 1 beta' and 1 omega subunit. When a sigma factor is associated with the core the holoenzyme is formed, which can initiate transcription. The cofactor is Mg(2+). Requires Zn(2+) as cofactor.

The catalysed reaction is RNA(n) + a ribonucleoside 5'-triphosphate = RNA(n+1) + diphosphate. Its function is as follows. DNA-dependent RNA polymerase catalyzes the transcription of DNA into RNA using the four ribonucleoside triphosphates as substrates. The protein is DNA-directed RNA polymerase subunit beta' of Enterococcus faecalis (strain ATCC 700802 / V583).